Consider the following 397-residue polypeptide: CCA-adding enzyme (397 aa).

The ATP site is built by glycine 26 and arginine 29. Positions 26 and 29 each coordinate CTP. The Mg(2+) site is built by aspartate 39 and aspartate 41. The ATP site is built by arginine 110, aspartate 153, arginine 156, arginine 159, and arginine 162. CTP-binding residues include arginine 110, aspartate 153, arginine 156, arginine 159, and arginine 162.

Belongs to the tRNA nucleotidyltransferase/poly(A) polymerase family. Bacterial CCA-adding enzyme type 3 subfamily. Homodimer. Mg(2+) is required as a cofactor.

It carries out the reaction a tRNA precursor + 2 CTP + ATP = a tRNA with a 3' CCA end + 3 diphosphate. The catalysed reaction is a tRNA with a 3' CCA end + 2 CTP + ATP = a tRNA with a 3' CCACCA end + 3 diphosphate. Catalyzes the addition and repair of the essential 3'-terminal CCA sequence in tRNAs without using a nucleic acid template. Adds these three nucleotides in the order of C, C, and A to the tRNA nucleotide-73, using CTP and ATP as substrates and producing inorganic pyrophosphate. tRNA 3'-terminal CCA addition is required both for tRNA processing and repair. Also involved in tRNA surveillance by mediating tandem CCA addition to generate a CCACCA at the 3' terminus of unstable tRNAs. While stable tRNAs receive only 3'-terminal CCA, unstable tRNAs are marked with CCACCA and rapidly degraded. In Bacillus mycoides (strain KBAB4) (Bacillus weihenstephanensis), this protein is CCA-adding enzyme.